We begin with the raw amino-acid sequence, 89 residues long: Small ribosomal subunit protein uS15 (89 aa).

Belongs to the universal ribosomal protein uS15 family. In terms of assembly, part of the 30S ribosomal subunit. Forms a bridge to the 50S subunit in the 70S ribosome, contacting the 23S rRNA.

Functionally, one of the primary rRNA binding proteins, it binds directly to 16S rRNA where it helps nucleate assembly of the platform of the 30S subunit by binding and bridging several RNA helices of the 16S rRNA. In terms of biological role, forms an intersubunit bridge (bridge B4) with the 23S rRNA of the 50S subunit in the ribosome. The polypeptide is Small ribosomal subunit protein uS15 (Pseudarthrobacter chlorophenolicus (strain ATCC 700700 / DSM 12829 / CIP 107037 / JCM 12360 / KCTC 9906 / NCIMB 13794 / A6) (Arthrobacter chlorophenolicus)).